The sequence spans 283 residues: MRDSQNTAQTLTESLKYFLKYRDQTVVIKYGGNAMIDEKVKESILKDILLLKTVGIKVVLVHGGGPAIGELLEKYEQKSQFVQGLRVTDKKTAQLALTALAGKVNKSLVQDIIRLGGNAIGVSGIDGKLIEAKPISEDLDYVGEITAIHPEIIERINQTDAVPVIASAGIGLDGEIYNVNADTAASRIAGALSAEQFILLSDVRGLYGNFPDEESFIDEINLTNLEKLVKEKKITDRMIPKIEAIKYAMFEGLGQAVLLDGRVPHALLLELFTDKGQGTMINH.

Substrate contacts are provided by residues 64-65 (GG), R86, and N178.

This sequence belongs to the acetylglutamate kinase family. ArgB subfamily.

It is found in the cytoplasm. It catalyses the reaction N-acetyl-L-glutamate + ATP = N-acetyl-L-glutamyl 5-phosphate + ADP. The protein operates within amino-acid biosynthesis; L-arginine biosynthesis; N(2)-acetyl-L-ornithine from L-glutamate: step 2/4. In terms of biological role, catalyzes the ATP-dependent phosphorylation of N-acetyl-L-glutamate. This Lactococcus lactis subsp. lactis (strain IL1403) (Streptococcus lactis) protein is Acetylglutamate kinase.